The following is a 790-amino-acid chain: Protein SEY1 (790 aa).

Over 1–692 the chain is Cytoplasmic; sequence MELSEGELSH…KRSIVQHITQ (692 aa). The region spanning 55-284 is the GB1/RHD3-type G domain; that stretch reads GNNYHIISVF…VSNELFKPEY (230 aa). 65–72 provides a ligand contact to GTP; it reads GSQSTGKS. A helical transmembrane segment spans residues 693-713; it reads IPYYIYLIILVLGWNEFMAII. At 714 to 716 the chain is on the lumenal side; the sequence is RNP. Residues 717–737 traverse the membrane as a helical segment; the sequence is LFFSLSIVLGATVYVLYYLGL. The Cytoplasmic portion of the chain corresponds to 738–790; that stretch reads LRPALVVAQRTMDEVIVMAKTKLREVLIDDHEVTGRQLNKMAGSKENIELDDM.

This sequence belongs to the TRAFAC class dynamin-like GTPase superfamily. GB1/RHD3 GTPase family. RHD3 subfamily.

The protein localises to the endoplasmic reticulum membrane. Cooperates with the reticulon proteins and tubule-shaping DP1 family proteins to generate and maintain the structure of the tubular endoplasmic reticulum network. Has GTPase activity, which is required for its function in ER organization. This Candida albicans (strain WO-1) (Yeast) protein is Protein SEY1.